A 211-amino-acid chain; its full sequence is PITH domain-containing protein CG6153 (211 aa).

The PITH domain occupies D20 to R192.

The protein belongs to the PITHD1 family.

The chain is PITH domain-containing protein CG6153 from Drosophila melanogaster (Fruit fly).